Here is a 409-residue protein sequence, read N- to C-terminus: 2,3-bisphosphoglycerate-independent phosphoglycerate mutase (409 aa).

Residues 160-179 are disordered; it reads ITDADPKHEGNKPKTVKPLD.

This sequence belongs to the BPG-independent phosphoglycerate mutase family. A-PGAM subfamily.

It carries out the reaction (2R)-2-phosphoglycerate = (2R)-3-phosphoglycerate. It participates in carbohydrate degradation; glycolysis; pyruvate from D-glyceraldehyde 3-phosphate: step 3/5. Catalyzes the interconversion of 2-phosphoglycerate and 3-phosphoglycerate. The sequence is that of 2,3-bisphosphoglycerate-independent phosphoglycerate mutase from Methanosphaera stadtmanae (strain ATCC 43021 / DSM 3091 / JCM 11832 / MCB-3).